The sequence spans 823 residues: Putative ankyrin repeat domain-containing protein 20A4 (823 aa).

5 ANK repeats span residues 66–95 (QHRT…QIDV), 99–128 (ENRT…NPNL), 132–161 (YGNT…HIEA), 165–194 (DNNT…SSHA), and 198–227 (LRRS…DVFA). 2 disordered regions span residues 301 to 343 (VPEK…EVED) and 356 to 405 (QTLR…NICD). Positions 371-384 (EQQRHERSEKKQPQ) are enriched in basic and acidic residues. Coiled-coil stretches lie at residues 431–480 (KKLK…KQLE), 565–724 (EMIT…NNST), and 776–806 (FVLE…KTEV).

The chain is Putative ankyrin repeat domain-containing protein 20A4 from Homo sapiens (Human).